The primary structure comprises 308 residues: Ribonuclease HIII (308 aa).

One can recognise an RNase H type-2 domain in the interval 88–304 (FHCIGSDEAG…RDKAIHLINQ (217 aa)). A divalent metal cation is bound by residues D94, E95, and D199.

It belongs to the RNase HII family. RnhC subfamily. It depends on Mn(2+) as a cofactor. Mg(2+) serves as cofactor.

It is found in the cytoplasm. It catalyses the reaction Endonucleolytic cleavage to 5'-phosphomonoester.. Functionally, endonuclease that specifically degrades the RNA of RNA-DNA hybrids. The sequence is that of Ribonuclease HIII from Staphylococcus epidermidis (strain ATCC 35984 / DSM 28319 / BCRC 17069 / CCUG 31568 / BM 3577 / RP62A).